The following is a 178-amino-acid chain: Small ribosomal subunit protein uS4 (178 aa).

Residues 104 to 166 enclose the S4 RNA-binding domain; sequence RRLQTLVYRK…PNSPMALENH (63 aa).

It belongs to the universal ribosomal protein uS4 family. As to quaternary structure, part of the 30S ribosomal subunit. Contacts protein S5. The interaction surface between S4 and S5 is involved in control of translational fidelity.

In terms of biological role, one of the primary rRNA binding proteins, it binds directly to 16S rRNA where it nucleates assembly of the body of the 30S subunit. With S5 and S12 plays an important role in translational accuracy. This Methanococcus vannielii (strain ATCC 35089 / DSM 1224 / JCM 13029 / OCM 148 / SB) protein is Small ribosomal subunit protein uS4.